The chain runs to 229 residues: 4-hydroxy-tetrahydrodipicolinate reductase (229 aa).

Residues 10–15 (GSAGRM), 78–80 (GTT), and 102–105 (SSNM) contribute to the NAD(+) site. The Proton donor/acceptor role is filled by H133. Position 134 (H134) interacts with (S)-2,3,4,5-tetrahydrodipicolinate. K137 (proton donor) is an active-site residue. 143–144 (GT) provides a ligand contact to (S)-2,3,4,5-tetrahydrodipicolinate.

It belongs to the DapB family.

The protein localises to the cytoplasm. It carries out the reaction (S)-2,3,4,5-tetrahydrodipicolinate + NAD(+) + H2O = (2S,4S)-4-hydroxy-2,3,4,5-tetrahydrodipicolinate + NADH + H(+). The enzyme catalyses (S)-2,3,4,5-tetrahydrodipicolinate + NADP(+) + H2O = (2S,4S)-4-hydroxy-2,3,4,5-tetrahydrodipicolinate + NADPH + H(+). It functions in the pathway amino-acid biosynthesis; L-lysine biosynthesis via DAP pathway; (S)-tetrahydrodipicolinate from L-aspartate: step 4/4. In terms of biological role, catalyzes the conversion of 4-hydroxy-tetrahydrodipicolinate (HTPA) to tetrahydrodipicolinate. This is 4-hydroxy-tetrahydrodipicolinate reductase from Bdellovibrio bacteriovorus (strain ATCC 15356 / DSM 50701 / NCIMB 9529 / HD100).